We begin with the raw amino-acid sequence, 510 residues long: Tryptophan 6-hydroxylase fscE (510 aa).

Residues 11-31 (LLPIEGVIILVFVLSCFSLAI) traverse the membrane as a helical segment. Cysteine 452 contributes to the heme binding site.

It belongs to the cytochrome P450 family. Heme is required as a cofactor.

The protein resides in the membrane. It participates in secondary metabolite biosynthesis. In terms of biological role, tryptophan 6-hydroxylase; part of the fragmented gene cluster that mediates the biosynthesis of fusarochromene, a tryptophan-derived metabolite closely related to a group of mycotoxins including fusarochromanone. Within the pathway, fscE hydroxalates the first intermediate D-tryptophan to yield 6-hydroxytryptophan. The first step of the pathway is the epimerization of L-tryptophan to D-tryptophan in the presence of the NRPS-like tryptophan epimerase fscC. D-tryptophan is subsequently hydroxylated by the tryptophan 6-hydroxylase fscE to yield 6-hydroxytryptophan. The pyrrole ring undergoes cleavaged by the tryptophan 2,3-dioxygenase fscD and is finally converted to 4-hydroxykyrunenine by the hydrolase fscH. The NRPS-like oxidoreductase fscA reduces the carboxyl group to primary alcohol and the DMATS-type prenyltransferase fscG performs prenylation, followed by the formation of a chromene ring catalyzed by the oxidoreductase fscI, which leads to desacetylfusarochromene. Epoxidation by fscF and rearrangement reactions of chromene double bonds convert compound desacetylfusarochromene to fusarochromanones. Although specific acetyltransferases were not found near the fsc gene cluster, several predicted enzymes containing the N-acetyltransferase superfamily domain are present in the genome of F.equiseti. These predicted enzymes may have the potential to convert desacetylfusarochromene to fusarochromene. This is Tryptophan 6-hydroxylase fscE from Fusarium equiseti (Fusarium scirpi).